Reading from the N-terminus, the 691-residue chain is Transcription termination factor Rho (691 aa).

The disordered stretch occupies residues 48–303; that stretch reads ISDHQRGGSV…PEVDETELTE (256 aa). Residues 50–64 are compositionally biased toward basic and acidic residues; the sequence is DHQRGGSVADRDAAE. Composition is skewed to low complexity over residues 65–92 and 105–119; these read RAAQ…PAAE and DTSA…QPQA. Composition is skewed to basic and acidic residues over residues 120–158 and 188–273; these read EARE…SERR and DADR…EGGR. A Rho RNA-BD domain is found at 307–390; it reads LQPVAGILDV…VKISSVNGQP (84 aa). Residues 433–438, 445–450, and Arg-476 each bind ATP; these read GKGQRG and KAGKTM.

This sequence belongs to the Rho family. Homohexamer. The homohexamer assembles into an open ring structure.

Its function is as follows. Facilitates transcription termination by a mechanism that involves Rho binding to the nascent RNA, activation of Rho's RNA-dependent ATPase activity, and release of the mRNA from the DNA template. In Micrococcus luteus (Micrococcus lysodeikticus), this protein is Transcription termination factor Rho.